The chain runs to 136 residues: Large ribosomal subunit protein uL16c (136 aa).

The tract at residues 1–20 is disordered; that stretch reads MLSPKRTRFRKQHRGRMKGK.

It belongs to the universal ribosomal protein uL16 family. Part of the 50S ribosomal subunit.

Its subcellular location is the plastid. The protein resides in the chloroplast. The sequence is that of Large ribosomal subunit protein uL16c from Agrostis stolonifera (Creeping bentgrass).